A 349-amino-acid chain; its full sequence is MNKLKETIRMIEELDQETMQKARERVDNLIKPPKSLGRLEDLAVQLAGITKTIHPTVANKAIIVMAADHGVYEEGIAGFPQEITVVQTLNFVKGVTGVCALGKVSGTKIIPVDIGVKEDLDPNAGVLIRKIKYGTDNMAKGPAMSREEAIRALEVGIEVANEEIKNGVTLLGTGEMGIGNTTASTAILSVLGNFDPKEITGRGAGLSPEGIQRKAAVIKRAIEVNQPDATDGIDVVAKVGGLEIAGMAGVMLAAAANRIPVVVDGYIATAAALIAVSLEPKTKQYLIPSHASAEIGSIKATELLGIKPMIHMDLCLGEGSGAALVFPIVEAACHMINCMPTFEEAGITI.

Glu-318 serves as the catalytic Proton acceptor.

The protein belongs to the CobT family.

The enzyme catalyses 5,6-dimethylbenzimidazole + nicotinate beta-D-ribonucleotide = alpha-ribazole 5'-phosphate + nicotinate + H(+). The protein operates within nucleoside biosynthesis; alpha-ribazole biosynthesis; alpha-ribazole from 5,6-dimethylbenzimidazole: step 1/2. Its function is as follows. Catalyzes the synthesis of alpha-ribazole-5'-phosphate from nicotinate mononucleotide (NAMN) and 5,6-dimethylbenzimidazole (DMB). In Alkaliphilus metalliredigens (strain QYMF), this protein is Nicotinate-nucleotide--dimethylbenzimidazole phosphoribosyltransferase.